We begin with the raw amino-acid sequence, 310 residues long: Protoheme IX farnesyltransferase 2 (310 aa).

The next 9 membrane-spanning stretches (helical) occupy residues 21 to 41 (IWYLLVFTAFGAAVAASGIYG), 46 to 66 (IATWALMLFSVAAGSASANVL), 99 to 119 (FGLFLAGASMVMAACIALTTT), 125 to 145 (WAAAFIAFGLFNNVLVYSYML), 153 to 173 (IVLGGLCGGMPPMIGWVAVTT), 180 to 200 (GLVMGGLVFIWTPMHIWALTL), 226 to 246 (VIAVSTVAMALFSLAPLLITL), 256 to 276 (VYLATAAASGALIIALSAWVV), and 284 to 304 (AWVLFKFSSPYLAVLFIALMV).

The protein belongs to the UbiA prenyltransferase family. Protoheme IX farnesyltransferase subfamily.

The protein resides in the cell membrane. It catalyses the reaction heme b + (2E,6E)-farnesyl diphosphate + H2O = Fe(II)-heme o + diphosphate. Its pathway is porphyrin-containing compound metabolism; heme O biosynthesis; heme O from protoheme: step 1/1. Converts heme B (protoheme IX) to heme O by substitution of the vinyl group on carbon 2 of heme B porphyrin ring with a hydroxyethyl farnesyl side group. The polypeptide is Protoheme IX farnesyltransferase 2 (Cenarchaeum symbiosum (strain A)).